The primary structure comprises 505 residues: ATP synthase subunit beta, mitochondrial (505 aa).

184–191 (GGAGVGKT) contacts ATP.

This sequence belongs to the ATPase alpha/beta chains family. F-type ATPases have 2 components, CF(1) - the catalytic core - and CF(0) - the membrane proton channel. CF(1) has five subunits: alpha(3), beta(3), gamma(1), delta(1), epsilon(1). CF(0) has three main subunits: a, b and c.

Its subcellular location is the mitochondrion. It localises to the mitochondrion inner membrane. The catalysed reaction is ATP + H2O + 4 H(+)(in) = ADP + phosphate + 5 H(+)(out). Its function is as follows. Mitochondrial membrane ATP synthase (F(1)F(0) ATP synthase or Complex V) produces ATP from ADP in the presence of a proton gradient across the membrane which is generated by electron transport complexes of the respiratory chain. F-type ATPases consist of two structural domains, F(1) - containing the extramembraneous catalytic core, and F(0) - containing the membrane proton channel, linked together by a central stalk and a peripheral stalk. During catalysis, ATP synthesis in the catalytic domain of F(1) is coupled via a rotary mechanism of the central stalk subunits to proton translocation. Subunits alpha and beta form the catalytic core in F(1). Rotation of the central stalk against the surrounding alpha(3)beta(3) subunits leads to hydrolysis of ATP in three separate catalytic sites on the beta subunits. The sequence is that of ATP synthase subunit beta, mitochondrial (ATP2) from Kluyveromyces lactis (strain ATCC 8585 / CBS 2359 / DSM 70799 / NBRC 1267 / NRRL Y-1140 / WM37) (Yeast).